The following is a 2059-amino-acid chain: Non-reducing polyketide synthase stmB (2059 aa).

Positions 7–243 constitute a Starter acyltransferase (SAT) domain; it reads LLFGDQTVEL…LKLAAYGAVH (237 aa). The region spanning 366-796 is the Ketosynthase family 3 (KS3) domain; the sequence is SNSIAIVGMA…GGNSCLILEE (431 aa). Active-site for beta-ketoacyl synthase activity residues include cysteine 538, histidine 673, and histidine 713. Positions 895 to 1185 constitute a Malonyl-CoA:ACP transacylase (MAT) domain; that stretch reads WVFSGQGSQY…CGSMVKATLG (291 aa). An N-terminal hotdog fold region spans residues 1273–1413; that stretch reads LHFVKKETVT…SASEWTDEWS (141 aa). Residues 1273-1581 form the PKS/mFAS DH domain; it reads LHFVKKETVT…FQRMPRMVLH (309 aa). Histidine 1306 acts as the Proton acceptor; for dehydratase activity in catalysis. The tract at residues 1435-1581 is C-terminal hotdog fold; the sequence is GDHLRRPVVY…FQRMPRMVLH (147 aa). The Proton donor; for dehydratase activity role is filled by aspartate 1495. The region spanning 1619–1696 is the Carrier domain; that stretch reads PPKHDLADQL…DARRALGGDE (78 aa). Serine 1656 is modified (O-(pantetheine 4'-phosphoryl)serine). The segment at 1693-1727 is disordered; sequence GGDETASESENDAEGDAPSDGGSPSGSWTPISPPE. Positions 1697-1709 are enriched in acidic residues; that stretch reads TASESENDAEGDA. Positions 1710 to 1719 are enriched in low complexity; sequence PSDGGSPSGS. Residues 1778-2059 form a thioesterase (TE) domain region; it reads AVEYKSNVVL…LGKLLQEAVA (282 aa).

Requires pantetheine 4'-phosphate as cofactor.

It participates in mycotoxin biosynthesis. Functionally, non-reducing polyketide synthase; part of the gene cluster that mediates the biosynthesis of stromemycin, a depside C-glucoside with two unsaturated C9 side chains belonging to aromatic polyketide glycosides. The HR-PKS stmA and the NR-PKS stmB act as scaffold-generating enzymes responsible for the biosynthesis of the polyketide skeleton bininalkenylresorcylic acid. StmA condenses on acetyl-CoA starter unit with 4 malonyl-CoA units and the stmB uses 3 more malonyl-CoA units and catalyzes the depside bond formation. The glycoytransferase stmC then acts as the tailoring enzyme responsible for 3-C-glucosylation of bininalkenylresorcylic acid to yield stromemycin. The polypeptide is Non-reducing polyketide synthase stmB (Aspergillus ustus).